Here is a 1140-residue protein sequence, read N- to C-terminus: Centrosomal protein of 135 kDa (1140 aa).

The homodimerization stretch occupies residues 11-64 (NIRKRLDQLGYRQTLTVECLPLVEKLFSDLVHTTESLRQSKLSAVKAEKESANF). Coiled coils occupy residues 75 to 151 (NARL…KNLH) and 199 to 416 (LQVA…FAVT). Phosphoserine occurs at positions 383 and 439. Coiled coils occupy residues 447–644 (LKGI…LENK), 668–1036 (SLRI…LESL), and 1079–1113 (NTML…AIQE). Ser688 bears the Phosphoserine mark. The segment at 1114-1140 (MRRHGLATPPLSSTLRSPSHSPEHRNV) is disordered. Thr1121 carries the phosphothreonine modification. Residues 1121–1133 (TPPLSSTLRSPSH) are compositionally biased toward low complexity. Ser1130 carries the phosphoserine modification.

This sequence belongs to the CEP135/TSGA10 family. In terms of assembly, homodimer. Interacts with DCTN2. Interacts with CEP250.

It is found in the cytoplasm. It localises to the cytoskeleton. Its subcellular location is the microtubule organizing center. The protein resides in the centrosome. The protein localises to the centriole. Functionally, centrosomal microtubule-binding protein involved in centriole biogenesis. Acts as a scaffolding protein during early centriole biogenesis. Required for the targeting of centriole satellite proteins to centrosomes such as of PCM1, SSX2IP and CEP290 and recruitment of WRAP73 to centrioles. Also required for centriole-centriole cohesion during interphase by acting as a platform protein for CEP250 at the centriole. Required for the recruitment of CEP295 to the proximal end of new-born centrioles at the centriolar microtubule wall during early S phase in a PLK4-dependent manner. This is Centrosomal protein of 135 kDa from Homo sapiens (Human).